The primary structure comprises 376 residues: Serpin B9 (376 aa).

Met-1 is subject to N-acetylmethionine.

The protein belongs to the serpin family. Ov-serpin subfamily.

Its subcellular location is the cytoplasm. Granzyme B inhibitor. This is Serpin B9 (SERPINB9) from Homo sapiens (Human).